We begin with the raw amino-acid sequence, 311 residues long: Malate dehydrogenase (311 aa).

NAD(+) is bound by residues 7-13 (GAAGGIG) and aspartate 34. Substrate-binding residues include arginine 81 and arginine 87. Residues asparagine 94 and 117-119 (ITN) each bind NAD(+). Positions 119 and 153 each coordinate substrate. Histidine 177 acts as the Proton acceptor in catalysis. Methionine 227 lines the NAD(+) pocket.

This sequence belongs to the LDH/MDH superfamily. MDH type 1 family. In terms of assembly, homodimer.

The catalysed reaction is (S)-malate + NAD(+) = oxaloacetate + NADH + H(+). In terms of biological role, catalyzes the reversible oxidation of malate to oxaloacetate. This is Malate dehydrogenase from Shewanella baltica (strain OS155 / ATCC BAA-1091).